The primary structure comprises 95 residues: Large ribosomal subunit protein bL25 (95 aa).

Belongs to the bacterial ribosomal protein bL25 family. As to quaternary structure, part of the 50S ribosomal subunit; part of the 5S rRNA/L5/L18/L25 subcomplex. Contacts the 5S rRNA. Binds to the 5S rRNA independently of L5 and L18.

This is one of the proteins that binds to the 5S RNA in the ribosome where it forms part of the central protuberance. The sequence is that of Large ribosomal subunit protein bL25 from Shewanella amazonensis (strain ATCC BAA-1098 / SB2B).